The following is a 1159-amino-acid chain: WASH complex subunit 5 (1159 aa).

Ser-917 carries the post-translational modification Phosphoserine.

The protein belongs to the strumpellin family. In terms of assembly, component of the WASH core complex also described as WASH regulatory complex (SHRC) composed of WASH (WASHC1, WASH2P or WASH3P), WASHC2 (WASHC2A or WASHC2C), WASHC3, WASHC4 and WASHC5. The WASH core complex associates via WASHC2 with the F-actin-capping protein dimer (formed by CAPZA1, CAPZA2 or CAPZA3 and CAPZB) in a transient or substoichiometric manner which was initially described as WASH complex. Interacts with VCP, PI4K2A. As to expression, expressed ubiquitously.

It is found in the cytoplasm. The protein resides in the cytosol. Its subcellular location is the endoplasmic reticulum. It localises to the early endosome. In terms of biological role, acts as a component of the WASH core complex that functions as a nucleation-promoting factor (NPF) at the surface of endosomes, where it recruits and activates the Arp2/3 complex to induce actin polymerization, playing a key role in the fission of tubules that serve as transport intermediates during endosome sorting. May be involved in axonal outgrowth. Involved in cellular localization of ADRB2. Involved in cellular trafficking of BLOC-1 complex cargos such as ATP7A and VAMP7. The polypeptide is WASH complex subunit 5 (Homo sapiens (Human)).